The chain runs to 262 residues: Rhomboid-type serine protease 2 (262 aa).

Over 1-16 (MNWKSYVFPGGHPPAA) the chain is Cytoplasmic. A helical membrane pass occupies residues 17-37 (LTTGLVVFLTAIYLLSFIFAL). Topologically, residues 38–57 (REDLSLAPESLFKLQMSRLS) are lumenal. The chain crosses the membrane as a helical span at residues 58–78 (LYPLIHLSLPHLLFNVLAIWA). Topologically, residues 79-89 (PLNLFEETHGT) are cytoplasmic. A helical membrane pass occupies residues 90-110 (VYTGVFLNLSALFAGILYCLL). The Lumenal portion of the chain corresponds to 111–112 (GK). Residues 113–133 (LLYPEALVAGASGWCFTLFAY) traverse the membrane as a helical segment. Ser124 functions as the Nucleophile in the catalytic mechanism. The Cytoplasmic portion of the chain corresponds to 134–151 (YSFKESQIRPRTRIFRTD). A helical membrane pass occupies residues 152–168 (YSIPTLYTPLVLLVAIA). Over 169–174 (VVIPGS) the chain is Lumenal. Residues 175–191 (SFWGHFFGLCVGYAIGY) form a helical membrane-spanning segment. Residue His179 is part of the active site. Over 192 to 262 (KESWFNKITP…DNSGTVLGTA (71 aa)) the chain is Cytoplasmic. The interval 243-262 (STETPLPLHNDNSGTVLGTA) is disordered. Over residues 252–262 (NDNSGTVLGTA) the composition is skewed to polar residues.

The protein belongs to the peptidase S54 family. Interacts with SNX3.

It localises to the golgi apparatus membrane. The protein resides in the golgi apparatus. The protein localises to the cis-Golgi network membrane. The enzyme catalyses Cleaves type-1 transmembrane domains using a catalytic dyad composed of serine and histidine that are contributed by different transmembrane domains.. Probable rhomboid-type serine protease that catalyzes intramembrane proteolysis. The sequence is that of Rhomboid-type serine protease 2 (RBD2) from Saccharomyces cerevisiae (strain ATCC 204508 / S288c) (Baker's yeast).